A 212-amino-acid chain; its full sequence is Proteasome subunit beta 2 (212 aa).

A propeptide spans 1 to 15 (removed in mature form; by autocatalysis); sequence MLHHPGTGQLRALKG. Thr16 serves as the catalytic Nucleophile.

This sequence belongs to the peptidase T1B family. As to quaternary structure, the 20S proteasome core is composed of 14 alpha and 14 beta subunits that assemble into four stacked heptameric rings, resulting in a barrel-shaped structure. The two inner rings, each composed of seven catalytic beta subunits, are sandwiched by two outer rings, each composed of seven alpha subunits. The catalytic chamber with the active sites is on the inside of the barrel. Has a gated structure, the ends of the cylinder being occluded by the N-termini of the alpha-subunits. Is capped at one or both ends by the proteasome regulatory ATPase, PAN.

The protein localises to the cytoplasm. The catalysed reaction is Cleavage of peptide bonds with very broad specificity.. Its activity is regulated as follows. The formation of the proteasomal ATPase PAN-20S proteasome complex, via the docking of the C-termini of PAN into the intersubunit pockets in the alpha-rings, triggers opening of the gate for substrate entry. Interconversion between the open-gate and close-gate conformations leads to a dynamic regulation of the 20S proteasome proteolysis activity. Functionally, component of the proteasome core, a large protease complex with broad specificity involved in protein degradation. The chain is Proteasome subunit beta 2 from Hyperthermus butylicus (strain DSM 5456 / JCM 9403 / PLM1-5).